A 263-amino-acid polypeptide reads, in one-letter code: Small ribosomal subunit protein bS1c (263 aa).

S1 motif domains are found at residues 27 to 96 (GDIV…LSIR), 114 to 178 (DSLL…LSHR), and 192 to 260 (GNII…LSMK).

This sequence belongs to the bacterial ribosomal protein bS1 family.

Its subcellular location is the plastid. It localises to the chloroplast. The polypeptide is Small ribosomal subunit protein bS1c (rps1) (Porphyra purpurea (Red seaweed)).